The primary structure comprises 148 residues: NADH-quinone oxidoreductase subunit A (148 aa).

A run of 3 helical transmembrane segments spans residues 14-34 (WAFA…LVGG), 68-88 (FYLV…LYAW), and 98-118 (VGFV…VYLV).

The protein belongs to the complex I subunit 3 family. In terms of assembly, NDH-1 is composed of 13 different subunits. Subunits NuoA, H, J, K, L, M, N constitute the membrane sector of the complex.

The protein resides in the cell inner membrane. It carries out the reaction a quinone + NADH + 5 H(+)(in) = a quinol + NAD(+) + 4 H(+)(out). In terms of biological role, NDH-1 shuttles electrons from NADH, via FMN and iron-sulfur (Fe-S) centers, to quinones in the respiratory chain. The immediate electron acceptor for the enzyme in this species is believed to be ubiquinone. Couples the redox reaction to proton translocation (for every two electrons transferred, four hydrogen ions are translocated across the cytoplasmic membrane), and thus conserves the redox energy in a proton gradient. The chain is NADH-quinone oxidoreductase subunit A from Klebsiella pneumoniae subsp. pneumoniae (strain ATCC 700721 / MGH 78578).